Reading from the N-terminus, the 186-residue chain is Trafficking protein particle complex subunit 3 (186 aa).

It belongs to the TRAPP small subunits family. BET3 subfamily. Homodimer. Part of the multisubunit TRAPP (transport protein particle) complex.

The protein localises to the golgi apparatus. The protein resides in the cis-Golgi network. It is found in the endoplasmic reticulum. May play a role in vesicular transport from endoplasmic reticulum to Golgi. The chain is Trafficking protein particle complex subunit 3 (trappc3) from Dictyostelium discoideum (Social amoeba).